Here is a 293-residue protein sequence, read N- to C-terminus: Pyridoxal 5'-phosphate synthase subunit PdxS (293 aa).

Position 23 (Asp23) interacts with D-ribose 5-phosphate. Residue Lys80 is the Schiff-base intermediate with D-ribose 5-phosphate of the active site. Residue Gly152 coordinates D-ribose 5-phosphate. Arg164 contacts D-glyceraldehyde 3-phosphate. Residues Gly213 and 234 to 235 (GS) each bind D-ribose 5-phosphate.

This sequence belongs to the PdxS/SNZ family. As to quaternary structure, in the presence of PdxT, forms a dodecamer of heterodimers.

The catalysed reaction is aldehydo-D-ribose 5-phosphate + D-glyceraldehyde 3-phosphate + L-glutamine = pyridoxal 5'-phosphate + L-glutamate + phosphate + 3 H2O + H(+). It functions in the pathway cofactor biosynthesis; pyridoxal 5'-phosphate biosynthesis. Its function is as follows. Catalyzes the formation of pyridoxal 5'-phosphate from ribose 5-phosphate (RBP), glyceraldehyde 3-phosphate (G3P) and ammonia. The ammonia is provided by the PdxT subunit. Can also use ribulose 5-phosphate and dihydroxyacetone phosphate as substrates, resulting from enzyme-catalyzed isomerization of RBP and G3P, respectively. The chain is Pyridoxal 5'-phosphate synthase subunit PdxS from Thermus thermophilus (strain ATCC BAA-163 / DSM 7039 / HB27).